We begin with the raw amino-acid sequence, 359 residues long: tRNA-specific 2-thiouridylase MnmA (359 aa).

ATP-binding positions include 11–18 (GISGGVDS) and Ile37. The active-site Nucleophile is Cys99. Cys99 and Cys195 form a disulfide bridge. Gly123 serves as a coordination point for ATP. The tract at residues 145–147 (KDQ) is interaction with tRNA. The active-site Cysteine persulfide intermediate is the Cys195. Residues 304–305 (RY) form an interaction with tRNA region.

This sequence belongs to the MnmA/TRMU family.

It localises to the cytoplasm. The catalysed reaction is S-sulfanyl-L-cysteinyl-[protein] + uridine(34) in tRNA + AH2 + ATP = 2-thiouridine(34) in tRNA + L-cysteinyl-[protein] + A + AMP + diphosphate + H(+). Catalyzes the 2-thiolation of uridine at the wobble position (U34) of tRNA, leading to the formation of s(2)U34. This is tRNA-specific 2-thiouridylase MnmA from Chlorobium phaeobacteroides (strain BS1).